Reading from the N-terminus, the 425-residue chain is Probable mitochondrial import inner membrane translocase subunit tin-44 (425 aa).

A coiled-coil region spans residues 38-149; it reads FLNNLIDNVR…EHVEKVAEKV (112 aa).

Belongs to the Tim44 family. Probable component of the PAM complex at least composed of a mitochondrial HSP70 protein, GrpE, tin-44, tim-16 and tim-14/dnj-21. The complex interacts with the tim-23 component of the TIM23 complex.

The protein localises to the mitochondrion inner membrane. Its function is as follows. Essential component of the PAM complex, a complex required for the translocation of transit peptide-containing proteins from the inner membrane into the mitochondrial matrix in an ATP-dependent manner. Recruits mitochondrial HSP70 to drive protein translocation into the matrix using ATP as an energy source. This chain is Probable mitochondrial import inner membrane translocase subunit tin-44, found in Caenorhabditis elegans.